The sequence spans 156 residues: 3-hydroxyacyl-[acyl-carrier-protein] dehydratase FabZ (156 aa).

The active site involves histidine 57.

Belongs to the thioester dehydratase family. FabZ subfamily.

The protein localises to the cytoplasm. The enzyme catalyses a (3R)-hydroxyacyl-[ACP] = a (2E)-enoyl-[ACP] + H2O. Its function is as follows. Involved in unsaturated fatty acids biosynthesis. Catalyzes the dehydration of short chain beta-hydroxyacyl-ACPs and long chain saturated and unsaturated beta-hydroxyacyl-ACPs. The chain is 3-hydroxyacyl-[acyl-carrier-protein] dehydratase FabZ from Anaeromyxobacter sp. (strain K).